The following is a 607-amino-acid chain: MYHSIKRFLIGKPLKSQAAGEQKLTKLKALAMLSSDALSSVAYGTEQILIILATISAAAFWYSIPIAVGVLILLLALILSYRQIIYAYPQGGGAYIVSKENLGEKPGLIAGGSLLVDYILTVAVSISAGTDAITSAFPALHDYHVPIAIFLVLVIMILNLRGLSESASILAYPVYLFVVALLVLIAVGLFKLMTGQIDQPAHHTSLGTPVAGITLFLLLKAFSSGCSALTGVEAISNAIPAFKNPPARNAARTLAMMGILLAILFSGITVLAYGYGTAPKPDETVVSQIASETFGRNVFYYVIQGVTSLILVLAANTGFSAFPQLAFNLARDQYMPRMFTVRGDRLGFSNGIIFLGFASIVLIILFGGQTEHLIPLYAVGVFIPFTLSQTGMCMKWIKQKPKGWIGKMLINSCGALISFMVLSILFVTKFNVVWPVLIFMPIVVLLFFAIKNHYTAVGEQLRIVDKEPEEIKGTVVIVPVAGVTTVVQKSIHYAKSLSDQVIAVHVSFDREQEKKFEKRWEELNNGVRLVTLHSSYRSLVHPFDKFLETVEAKAKKEQFSVMVLFPQFITKKRWHTILHNQSAFLLRVRLFWKKDIMVATLPYHFKK.

At 1–30 (MYHSIKRFLIGKPLKSQAAGEQKLTKLKAL) the chain is on the cytoplasmic side. A helical transmembrane segment spans residues 31–49 (AMLSSDALSSVAYGTEQIL). K(+) is bound by residues Asp-36 and Tyr-43. Residues 50-62 (IILATISAAAFWY) lie on the Extracellular side of the membrane. Residues 63 to 84 (SIPIAVGVLILLLALILSYRQI) form a helical membrane-spanning segment. Topologically, residues 85-105 (IYAYPQGGGAYIVSKENLGEK) are cytoplasmic. Residues 106 to 134 (PGLIAGGSLLVDYILTVAVSISAGTDAIT) form a helical membrane-spanning segment. 2 residues coordinate K(+): Asp-117 and Ser-125. The Extracellular segment spans residues 135 to 142 (SAFPALHD). A helical transmembrane segment spans residues 143–162 (YHVPIAIFLVLVIMILNLRG). Residues 163 to 166 (LSES) are Cytoplasmic-facing. Residues 167–190 (ASILAYPVYLFVVALLVLIAVGLF) traverse the membrane as a helical segment. At 191–214 (KLMTGQIDQPAHHTSLGTPVAGIT) the chain is on the extracellular side. The helical transmembrane segment at 215-238 (LFLLLKAFSSGCSALTGVEAISNA) threads the bilayer. Topologically, residues 239–249 (IPAFKNPPARN) are cytoplasmic. Residues 250 to 271 (AARTLAMMGILLAILFSGITVL) traverse the membrane as a helical segment. Topologically, residues 272 to 298 (AYGYGTAPKPDETVVSQIASETFGRNV) are extracellular. The helical transmembrane segment at 299-323 (FYYVIQGVTSLILVLAANTGFSAFP) threads the bilayer. The Cytoplasmic portion of the chain corresponds to 324 to 347 (QLAFNLARDQYMPRMFTVRGDRLG). The helical transmembrane segment at 348–366 (FSNGIIFLGFASIVLIILF) threads the bilayer. Residues 367–372 (GGQTEH) lie on the Extracellular side of the membrane. A helical transmembrane segment spans residues 373-393 (LIPLYAVGVFIPFTLSQTGMC). The Cytoplasmic segment spans residues 394–405 (MKWIKQKPKGWI). Residues 406-428 (GKMLINSCGALISFMVLSILFVT) form a helical membrane-spanning segment. Residues 429 to 431 (KFN) lie on the Extracellular side of the membrane. Residues 432–447 (VVWPVLIFMPIVVLLF) form a helical membrane-spanning segment. The Cytoplasmic segment spans residues 448–607 (FAIKNHYTAV…VATLPYHFKK (160 aa)).

It belongs to the amino acid-polyamine-organocation (APC) superfamily. As to quaternary structure, homodimer.

It is found in the cell membrane. The enzyme catalyses K(+)(in) + H(+)(in) = K(+)(out) + H(+)(out). Potassium uptake increases at lower external pH and is abolished by the proton ionophore carbonyl cyanide m-chlorophenylhydrazone (CCCP). Binds cyclic di-AMP (c-di-AMP), which inhibits the potassium transport activity. Functionally, high-affinity potassium transporter. Functions as a K(+)/H(+) symporter. The protein is Potassium transporter KimA of Bacillus subtilis (strain 168).